Here is a 214-residue protein sequence, read N- to C-terminus: Osteoclast-stimulating factor 1 (214 aa).

In terms of domain architecture, SH3 spans 12–71; the sequence is GQVKVFRALFTFDPRTPDELYFEEGDILYISDTSDTNWWKGTCRGRTGLIPSNYVAEQAE. 3 ANK repeats span residues 72-101, 105-135, and 139-168; these read TIDH…GING, AGNT…ELNQ, and LGDT…RTDI.

In terms of tissue distribution, ubiquitously expressed.

The protein localises to the cytoplasm. Its function is as follows. Induces bone resorption, acting probably through a signaling cascade which results in the secretion of factor(s) enhancing osteoclast formation and activity. The polypeptide is Osteoclast-stimulating factor 1 (ostf1) (Monopterus albus (Swamp eel)).